Consider the following 143-residue polypeptide: Large ribosomal subunit protein uL15 (143 aa).

Basic residues predominate over residues 1 to 13 (MIRKKKKVKKIRG). The disordered stretch occupies residues 1 to 39 (MIRKKKKVKKIRGSRTCGGGSHKKRRGAGNKGGRGMAGG). Positions 29 to 38 (GNKGGRGMAG) are enriched in gly residues.

This sequence belongs to the universal ribosomal protein uL15 family. Part of the 50S ribosomal subunit.

Its function is as follows. Binds to the 23S rRNA. The protein is Large ribosomal subunit protein uL15 of Methanocaldococcus jannaschii (strain ATCC 43067 / DSM 2661 / JAL-1 / JCM 10045 / NBRC 100440) (Methanococcus jannaschii).